We begin with the raw amino-acid sequence, 150 residues long: Macrodomain Ter protein (150 aa).

This sequence belongs to the MatP family. In terms of assembly, homodimer.

It is found in the cytoplasm. Required for spatial organization of the terminus region of the chromosome (Ter macrodomain) during the cell cycle. Prevents early segregation of duplicated Ter macrodomains during cell division. Binds specifically to matS, which is a 13 bp signature motif repeated within the Ter macrodomain. In Salmonella agona (strain SL483), this protein is Macrodomain Ter protein.